Here is a 222-residue protein sequence, read N- to C-terminus: Thymidylate kinase (222 aa).

Residue Gly7–Ser14 coordinates ATP.

This sequence belongs to the thymidylate kinase family.

It catalyses the reaction dTMP + ATP = dTDP + ADP. Phosphorylation of dTMP to form dTDP in both de novo and salvage pathways of dTTP synthesis. This chain is Thymidylate kinase, found in Chlorobium chlorochromatii (strain CaD3).